A 242-amino-acid chain; its full sequence is Octanoyltransferase (242 aa).

Residues 31-206 enclose the BPL/LPL catalytic domain; that stretch reads SQTTDEIWFL…LFLKNFGYNQ (176 aa). Residues 70–77, 137–139, and 150–152 each bind substrate; these read RGGQVTYH, SIG, and GLA. Catalysis depends on Cys168, which acts as the Acyl-thioester intermediate.

Belongs to the LipB family.

It is found in the cytoplasm. It carries out the reaction octanoyl-[ACP] + L-lysyl-[protein] = N(6)-octanoyl-L-lysyl-[protein] + holo-[ACP] + H(+). Its pathway is protein modification; protein lipoylation via endogenous pathway; protein N(6)-(lipoyl)lysine from octanoyl-[acyl-carrier-protein]: step 1/2. Functionally, catalyzes the transfer of endogenously produced octanoic acid from octanoyl-acyl-carrier-protein onto the lipoyl domains of lipoate-dependent enzymes. Lipoyl-ACP can also act as a substrate although octanoyl-ACP is likely to be the physiological substrate. This chain is Octanoyltransferase, found in Coxiella burnetii (strain RSA 493 / Nine Mile phase I).